The primary structure comprises 372 residues: THAP domain-containing protein 5 (372 aa).

The THAP-type zinc-finger motif lies at 1 to 85 (MTRYCAATRC…LKPNAIPTLF (85 aa)). Residues 306–362 (TDRHYLRQKIAKLQSKIAVLEAQENATLSRLRLLESVIAKLKQENLLSDEKLKILEN) adopt a coiled-coil conformation.

The protein resides in the nucleus. In Xenopus laevis (African clawed frog), this protein is THAP domain-containing protein 5 (thap5).